Here is a 643-residue protein sequence, read N- to C-terminus: MSRPSTPLLDKAPTPDRLRALPEQDLPQLAEELRTELIDAVSTTGGHLGAGLGVVELTVALHHVFNTPYDRIIWDVGHQAYPHKILTGRRDRIRTLRQAGGLSGFTKRAESEYDPFGAAHSSTSISAGLGMAVASELSGEKRNVIAVIGDGSMSAGMAYEAMNNAGALDARLIVILNDNDMSIAPPTGAMSAYLARLVSGRTYRSVREAAKQVAQKLPKFLQDKARKSEEYARAFFTGGTLFEELGFYYVGPIDGHNLDHLLPVLKNVRDTQKGPVLIHVVTQKGKGYAPAEAAADKYHGVNKFDVITGKQAKPPANAPSYTKIFGTSLIEEARHDDKIVAVTAAMPTGTGLDLFGEAFPKRVFDVGIAEQHAVTFAAGLASEGYKPFCAIYSTFLQRGYDQVVHDVSIQNLPVRFPIDRAGLVGADGPTHAGSFDTGFLAALPGFVVMAASDEAELRHMVRTAAEYDEGPISFRYPRGDGVGVDLPERGSVLEIGKGRIVREGTKVALLSFGTRLQECLAAAEELGATGLSTTVADARFAKPLDHDLIRRLAREHEVLVMVEEGAVGGFGSHVLQFLATDGLLDRGLKVRALTLPDIYQDHGKPDAMYAEAGLDRTGIVRTVFAALHRDELGHEALPTPFRA.

Residues histidine 78 and 119-121 (AHS) each bind thiamine diphosphate. Aspartate 150 contacts Mg(2+). Thiamine diphosphate is bound by residues 151–152 (GS), asparagine 179, tyrosine 288, and glutamate 370. Position 179 (asparagine 179) interacts with Mg(2+).

It belongs to the transketolase family. DXPS subfamily. Homodimer. Mg(2+) serves as cofactor. It depends on thiamine diphosphate as a cofactor.

The enzyme catalyses D-glyceraldehyde 3-phosphate + pyruvate + H(+) = 1-deoxy-D-xylulose 5-phosphate + CO2. Its pathway is metabolic intermediate biosynthesis; 1-deoxy-D-xylulose 5-phosphate biosynthesis; 1-deoxy-D-xylulose 5-phosphate from D-glyceraldehyde 3-phosphate and pyruvate: step 1/1. In terms of biological role, catalyzes the acyloin condensation reaction between C atoms 2 and 3 of pyruvate and glyceraldehyde 3-phosphate to yield 1-deoxy-D-xylulose-5-phosphate (DXP). The chain is 1-deoxy-D-xylulose-5-phosphate synthase from Brucella suis (strain ATCC 23445 / NCTC 10510).